The following is a 50-amino-acid chain: Acidic phospholipase A2 1 (50 aa).

Positions 27, 29, and 31 each coordinate Ca(2+). Cysteine 28 and cysteine 44 are disulfide-bonded. The active site involves histidine 47. Residue aspartate 48 coordinates Ca(2+).

This sequence belongs to the phospholipase A2 family. Group II subfamily. D49 sub-subfamily. Monomer. Ca(2+) serves as cofactor. Expressed by the venom gland.

It localises to the secreted. It catalyses the reaction a 1,2-diacyl-sn-glycero-3-phosphocholine + H2O = a 1-acyl-sn-glycero-3-phosphocholine + a fatty acid + H(+). Its function is as follows. Snake venom phospholipase A2 (PLA2) that displays a potent enzymatic activity as measured by indirect hemolysis of red blood cells. Is neither lethal when injected into mice nor does it present anticoagulant activity. Displays a moderate inhibitory activity on the aggregation of platelets induced by low levels of ADP, thrombin and arachidonate. In contrast, strongly inhibits platelet aggregation induced by high doses of collagen. Shows myotoxic activity, increases the plasma creatine-kinase activity and induces edema and myonecrosis of mouse skeletal muscles. PLA2 catalyzes the calcium-dependent hydrolysis of the 2-acyl groups in 3-sn-phosphoglycerides. This is Acidic phospholipase A2 1 from Lachesis muta muta (Bushmaster).